The sequence spans 359 residues: MKVLAAMSGGVDSAVAAARAVDMGHDVVGVHLALSRSASGKRGCCTPRDAQDAAQAAQTIGIPFYVWDFSEEFQEKVIDNFISEYSAGRTPNPCLRCNEHIKFSSLLRRALALGFDAVCTGHYARVFLDEDGTYQLHRASSWAKDQSYVLAVLQQAQLKHCYFPLGATPSKKLVRQEADERGLKVSKKPDSHDVCFIPSSNTGAWLSQRIGRRDGDIIDDLGQRVGSHTGAFAYTVGQRKGLRLSSPAWDGKPRYVLDIEPISNTVVVGPRESLRVDELSGAFTTTGWCFTSRPIECSVQVRAHSDPVSAIAFIRDDVLVVRPDEPVFAVAKGQSAAIYRGTRVLGQLMIDNTKKYASS.

ATP-binding positions include 6-13 and Leu32; that span reads AMSGGVDS. Residue Cys97 is the Nucleophile of the active site. Cys97 and Cys195 form a disulfide bridge. Gly121 is an ATP binding site. Residues 144–146 are interaction with tRNA; it reads KDQ. Cys195 serves as the catalytic Cysteine persulfide intermediate.

Belongs to the MnmA/TRMU family.

It localises to the cytoplasm. The catalysed reaction is S-sulfanyl-L-cysteinyl-[protein] + uridine(34) in tRNA + AH2 + ATP = 2-thiouridine(34) in tRNA + L-cysteinyl-[protein] + A + AMP + diphosphate + H(+). In terms of biological role, catalyzes the 2-thiolation of uridine at the wobble position (U34) of tRNA, leading to the formation of s(2)U34. The sequence is that of tRNA-specific 2-thiouridylase MnmA from Tropheryma whipplei (strain TW08/27) (Whipple's bacillus).